Here is a 172-residue protein sequence, read N- to C-terminus: Galectin-related protein (172 aa).

Ala2 carries the post-translational modification N-acetylalanine. Residues Ser22 and Ser25 each carry the phosphoserine modification. Positions 39 to 168 constitute a Galectin domain; the sequence is PFCGHIKGGM…TIKINGDLQI (130 aa).

As to quaternary structure, monomer.

Functionally, does not bind lactose, and may not bind carbohydrates. This Homo sapiens (Human) protein is Galectin-related protein (LGALSL).